Consider the following 590-residue polypeptide: Mitochondrial distribution and morphology protein 34 (590 aa).

The region spanning 1-225 (MSFIFNRETF…LPSVIFNMSQ (225 aa)) is the SMP-LTD domain. The segment covering 393 to 405 (RRKIKMRSRKPSK) has biased composition (basic residues). Residues 393–456 (RRKIKMRSRK…APEGGPNAED (64 aa)) form a disordered region. Residues 413 to 427 (PAQNDSGTSSCSNVA) show a composition bias toward polar residues.

Belongs to the MDM34 family. In terms of assembly, component of the ER-mitochondria encounter structure (ERMES) or MDM complex, composed of MMM1, MDM10, MDM12 and MDM34.

The protein localises to the mitochondrion outer membrane. Functionally, component of the ERMES/MDM complex, which serves as a molecular tether to connect the endoplasmic reticulum (ER) and mitochondria. Components of this complex are involved in the control of mitochondrial shape and protein biogenesis, and function in nonvesicular lipid trafficking between the ER and mitochondria. MDM34 is required for the interaction of the ER-resident membrane protein MMM1 and the outer mitochondrial membrane-resident beta-barrel protein MDM10. In Eremothecium gossypii (strain ATCC 10895 / CBS 109.51 / FGSC 9923 / NRRL Y-1056) (Yeast), this protein is Mitochondrial distribution and morphology protein 34.